Consider the following 213-residue polypeptide: Outer-membrane lipoprotein carrier protein (213 aa).

The N-terminal stretch at 1–18 (MKYFATICIAAYAGLAGA) is a signal peptide.

This sequence belongs to the LolA family. In terms of assembly, monomer.

It localises to the periplasm. Participates in the translocation of lipoproteins from the inner membrane to the outer membrane. Only forms a complex with a lipoprotein if the residue after the N-terminal Cys is not an aspartate (The Asp acts as a targeting signal to indicate that the lipoprotein should stay in the inner membrane). The chain is Outer-membrane lipoprotein carrier protein from Albidiferax ferrireducens (strain ATCC BAA-621 / DSM 15236 / T118) (Rhodoferax ferrireducens).